Reading from the N-terminus, the 37-residue chain is Large ribosomal subunit protein bL36 (37 aa).

Belongs to the bacterial ribosomal protein bL36 family.

This Desulfotalea psychrophila (strain LSv54 / DSM 12343) protein is Large ribosomal subunit protein bL36.